We begin with the raw amino-acid sequence, 986 residues long: Translation initiation factor IF-2 (986 aa).

The interval 47–388 (SAPAQTPHKE…RSKGRKGKYE (342 aa)) is disordered. Residues 53–64 (PHKEVSQEEVRV) are compositionally biased toward basic and acidic residues. The segment covering 78–94 (PEAASAEAASAPAAQEE) has biased composition (low complexity). Residues 95 to 113 (APQKAEPEKVEAEKAEAPK) show a composition bias toward basic and acidic residues. 2 stretches are compositionally biased toward low complexity: residues 127 to 141 (EAAP…PAEA) and 153 to 214 (APVA…QAPA). 2 stretches are compositionally biased toward basic and acidic residues: residues 215–225 (KAEEQEPEKAT) and 268–278 (GVERPGTERPA). Positions 286–300 (PAGAPGRPGERPTTG) are enriched in low complexity. Positions 358–374 (GKKDSFKDILDKRERVF) are enriched in basic and acidic residues. In terms of domain architecture, tr-type G spans 486-653 (KRPPVVTIMG…MVLLQADVLE (168 aa)). The segment at 495–502 (GHVDHGKT) is G1. 495–502 (GHVDHGKT) provides a ligand contact to GTP. The segment at 520-524 (GITQH) is G2. Residues 541–544 (DTPG) form a G3 region. Residues 541 to 545 (DTPGH) and 595 to 598 (NKID) contribute to the GTP site. The G4 stretch occupies residues 595–598 (NKID). Residues 631–633 (SAK) are G5.

This sequence belongs to the TRAFAC class translation factor GTPase superfamily. Classic translation factor GTPase family. IF-2 subfamily.

It is found in the cytoplasm. Its function is as follows. One of the essential components for the initiation of protein synthesis. Protects formylmethionyl-tRNA from spontaneous hydrolysis and promotes its binding to the 30S ribosomal subunits. Also involved in the hydrolysis of GTP during the formation of the 70S ribosomal complex. This is Translation initiation factor IF-2 from Citrifermentans bemidjiense (strain ATCC BAA-1014 / DSM 16622 / JCM 12645 / Bem) (Geobacter bemidjiensis).